We begin with the raw amino-acid sequence, 297 residues long: Protoheme IX farnesyltransferase (297 aa).

Helical transmembrane passes span 23-43 (VTQL…PGMP), 49-69 (VFGT…NCLI), 93-113 (IQVL…LYHL), 117-137 (LTMW…TVIL), 144-164 (NIVI…AAVA), 171-191 (AWVL…ALAL), 215-235 (RLHI…PYAI), 238-258 (SGAL…WYAW), and 275-295 (FSIL…WVGL).

It belongs to the UbiA prenyltransferase family. Protoheme IX farnesyltransferase subfamily.

It is found in the cell inner membrane. It carries out the reaction heme b + (2E,6E)-farnesyl diphosphate + H2O = Fe(II)-heme o + diphosphate. It participates in porphyrin-containing compound metabolism; heme O biosynthesis; heme O from protoheme: step 1/1. Converts heme B (protoheme IX) to heme O by substitution of the vinyl group on carbon 2 of heme B porphyrin ring with a hydroxyethyl farnesyl side group. The polypeptide is Protoheme IX farnesyltransferase (Bordetella pertussis (strain Tohama I / ATCC BAA-589 / NCTC 13251)).